We begin with the raw amino-acid sequence, 349 residues long: UDP-N-acetylenolpyruvoylglucosamine reductase (349 aa).

The FAD-binding PCMH-type domain occupies G25–Q197. The active site involves R173. Catalysis depends on S249, which acts as the Proton donor. E345 is an active-site residue.

The protein belongs to the MurB family. Requires FAD as cofactor.

The protein localises to the cytoplasm. It carries out the reaction UDP-N-acetyl-alpha-D-muramate + NADP(+) = UDP-N-acetyl-3-O-(1-carboxyvinyl)-alpha-D-glucosamine + NADPH + H(+). The protein operates within cell wall biogenesis; peptidoglycan biosynthesis. Functionally, cell wall formation. The chain is UDP-N-acetylenolpyruvoylglucosamine reductase from Burkholderia cenocepacia (strain HI2424).